Here is a 302-residue protein sequence, read N- to C-terminus: Meiotically up-regulated gene 129 protein (302 aa).

Has a role in meiosis. This chain is Meiotically up-regulated gene 129 protein (mug129), found in Schizosaccharomyces pombe (strain 972 / ATCC 24843) (Fission yeast).